The primary structure comprises 204 residues: Ribonuclease HII (204 aa).

An RNase H type-2 domain is found at 17–204 (QLVAGVDEVG…KPVQQLLQGD (188 aa)). Residues D23, E24, and D115 each coordinate a divalent metal cation.

The protein belongs to the RNase HII family. Requires Mn(2+) as cofactor. Mg(2+) is required as a cofactor.

Its subcellular location is the cytoplasm. It carries out the reaction Endonucleolytic cleavage to 5'-phosphomonoester.. Its function is as follows. Endonuclease that specifically degrades the RNA of RNA-DNA hybrids. The chain is Ribonuclease HII from Hahella chejuensis (strain KCTC 2396).